The primary structure comprises 317 residues: 3',5'-bisphosphate nucleotidase (317 aa).

The active-site Proton acceptor is the Asp-46. Mg(2+) contacts are provided by Glu-69, Asp-118, Ile-120, and Asp-121. Thr-123 (proton acceptor) is an active-site residue. Residue Thr-123 coordinates adenosine 3',5'-bisphosphate. Positions 198, 203, 227, 230, 244, 251, and 257 each coordinate AMP. Positions 203, 227, 230, and 244 each coordinate adenosine 3',5'-bisphosphate. Position 257 (Asp-257) interacts with Mg(2+). Asp-257 lines the adenosine 3',5'-bisphosphate pocket.

The protein belongs to the inositol monophosphatase superfamily. In terms of assembly, monomer. Mg(2+) serves as cofactor.

The protein resides in the cytoplasm. The catalysed reaction is adenosine 3',5'-bisphosphate + H2O = AMP + phosphate. It carries out the reaction 1D-myo-inositol 1,4-bisphosphate + H2O = 1D-myo-inositol 4-phosphate + phosphate. Inhibited by Li(2+). In terms of biological role, phosphatase that converts 3'-phosphoadenosine 5'-phosphate (PAP) to AMP. Is also able to hydrolyze inositol 1,4-bisphosphate but with less efficiency. The protein is 3',5'-bisphosphate nucleotidase of Entamoeba histolytica (strain ATCC 30459 / HM-1:IMSS / ABRM).